The following is a 303-amino-acid chain: Quinolinate synthase (303 aa).

Iminosuccinate-binding residues include histidine 24 and serine 41. Cysteine 86 is a [4Fe-4S] cluster binding site. Residues 112–114 (YVN) and serine 129 contribute to the iminosuccinate site. Cysteine 172 is a binding site for [4Fe-4S] cluster. Residues 198 to 200 (HPE) and threonine 215 contribute to the iminosuccinate site. Cysteine 260 is a [4Fe-4S] cluster binding site.

Belongs to the quinolinate synthase family. Type 2 subfamily. Requires [4Fe-4S] cluster as cofactor.

Its subcellular location is the cytoplasm. The catalysed reaction is iminosuccinate + dihydroxyacetone phosphate = quinolinate + phosphate + 2 H2O + H(+). Its pathway is cofactor biosynthesis; NAD(+) biosynthesis; quinolinate from iminoaspartate: step 1/1. Its function is as follows. Catalyzes the condensation of iminoaspartate with dihydroxyacetone phosphate to form quinolinate. The sequence is that of Quinolinate synthase from Alkaliphilus metalliredigens (strain QYMF).